The primary structure comprises 959 residues: Mitogen-activated protein kinase kinase kinase 13 (959 aa).

Positions 1–47 (MANPQEHLSCSSLPHLPLTENKTSGGRNELAAMGNHPSPKLPEDPQE) are disordered. Low complexity predominate over residues 7-18 (HLSCSSLPHLPL). In terms of domain architecture, Protein kinase spans 167–408 (ISELQWLGSG…FRQTLMHLDI (242 aa)). ATP contacts are provided by residues 173–181 (LGSGAQGAV) and Lys-194. Asp-278 acts as the Proton acceptor in catalysis. 2 leucine-zipper regions span residues 432-453 (VKKH…DEEL) and 485-506 (LSAI…EQAV). Disordered stretches follow at residues 533-599 (KRKG…GSHS), 739-828 (GSLD…RQRP), 842-902 (SSEN…LSDK), and 927-959 (NPVQ…SATW). Over residues 566–577 (SPLSGSPKMSTA) the composition is skewed to polar residues. Positions 581–593 (SRYRSKPRHRRGN) are enriched in basic residues. Composition is skewed to polar residues over residues 754 to 774 (DLSS…SERT) and 780 to 790 (SGCQSGISHQF). Acidic residues predominate over residues 808-820 (DSSEEEGEVDSEV). Basic and acidic residues predominate over residues 866 to 876 (SANRRQDRLAE). A compositionally biased stretch (acidic residues) spans 934–943 (SDCDSSEGEC). Residues 947–959 (TVRTSKNYSSATW) show a composition bias toward polar residues.

The protein belongs to the protein kinase superfamily. STE Ser/Thr protein kinase family. MAP kinase kinase kinase subfamily. Homodimer; forms dimers through the leucine-zipper motif. Interacts with the C-terminus of MAPK8IP1 through the kinase catalytic domain. Binds PRDX3. Associates with the IKK complex through the kinase domain. It depends on Mg(2+) as a cofactor. Autophosphorylated on serine and threonine residues.

It is found in the cytoplasm. The protein localises to the membrane. It catalyses the reaction L-seryl-[protein] + ATP = O-phospho-L-seryl-[protein] + ADP + H(+). The enzyme catalyses L-threonyl-[protein] + ATP = O-phospho-L-threonyl-[protein] + ADP + H(+). With respect to regulation, activated by autophosphorylation and homodimerization. Activates the JUN N-terminal pathway through activation of the MAP kinase kinase MAP2K7. Acts synergistically with PRDX3 to regulate the activation of NF-kappa-B in the cytosol. This activation is kinase-dependent and involves activating the IKK complex, the IKBKB-containing complex that phosphorylates inhibitors of NF-kappa-B. This Mus musculus (Mouse) protein is Mitogen-activated protein kinase kinase kinase 13 (Map3k13).